A 374-amino-acid chain; its full sequence is Queuine tRNA-ribosyltransferase (374 aa).

The active-site Proton acceptor is the Asp-89. Substrate is bound by residues 89–93 (DSGGF), Asp-143, Gln-187, and Gly-214. The tract at residues 245–251 (GVGKPED) is RNA binding. The Nucleophile role is filled by Asp-264. Residues 269–273 (TRNAR) form an RNA binding; important for wobble base 34 recognition region. Positions 302, 304, 307, and 333 each coordinate Zn(2+).

Belongs to the queuine tRNA-ribosyltransferase family. Homodimer. Within each dimer, one monomer is responsible for RNA recognition and catalysis, while the other monomer binds to the replacement base PreQ1. Requires Zn(2+) as cofactor.

It catalyses the reaction 7-aminomethyl-7-carbaguanine + guanosine(34) in tRNA = 7-aminomethyl-7-carbaguanosine(34) in tRNA + guanine. It functions in the pathway tRNA modification; tRNA-queuosine biosynthesis. In terms of biological role, catalyzes the base-exchange of a guanine (G) residue with the queuine precursor 7-aminomethyl-7-deazaguanine (PreQ1) at position 34 (anticodon wobble position) in tRNAs with GU(N) anticodons (tRNA-Asp, -Asn, -His and -Tyr). Catalysis occurs through a double-displacement mechanism. The nucleophile active site attacks the C1' of nucleotide 34 to detach the guanine base from the RNA, forming a covalent enzyme-RNA intermediate. The proton acceptor active site deprotonates the incoming PreQ1, allowing a nucleophilic attack on the C1' of the ribose to form the product. After dissociation, two additional enzymatic reactions on the tRNA convert PreQ1 to queuine (Q), resulting in the hypermodified nucleoside queuosine (7-(((4,5-cis-dihydroxy-2-cyclopenten-1-yl)amino)methyl)-7-deazaguanosine). The chain is Queuine tRNA-ribosyltransferase from Shewanella sp. (strain W3-18-1).